Reading from the N-terminus, the 857-residue chain is Inactive rhomboid protein 1 (857 aa).

Topologically, residues 1–413 (MAELRRDSTS…HRPFFTYWIT (413 aa)) are cytoplasmic. Positions 283–307 (FESPSDSTMKDVDSKQLDESELTGS) are disordered. The span at 290–300 (TMKDVDSKQLD) shows a compositional bias: basic and acidic residues. The helical transmembrane segment at 414–434 (FVHILITILAVCIYGIAPVGF) threads the bilayer. Topologically, residues 435 to 661 (SQHETVDSVL…PDQFYRLWLS (227 aa)) are lumenal. N-linked (GlcNAc...) asparagine glycosylation is present at Asn585. A helical transmembrane segment spans residues 662-682 (LFLHAGILHCLVSVCFQMTIL). Residues 683-693 (RDLEKLAGWLR) are Cytoplasmic-facing. Residues 694–714 (ISIIYILSGITGNLASAIFLP) form a helical membrane-spanning segment. At 715–716 (YR) the chain is on the lumenal side. Residues 717-737 (AEVGPAGSQFGILACLFVELI) traverse the membrane as a helical segment. Residues 738-748 (QSWQILAQPWR) are Cytoplasmic-facing. A helical transmembrane segment spans residues 749 to 769 (AFTKLLCVVLFLFAFGLLPWI). Topologically, residues 770-774 (DNFAH) are lumenal. A helical membrane pass occupies residues 775-795 (ISGFISGFFLSFAFLPYISFG). Topologically, residues 796–805 (RLDMYRKRCQ) are cytoplasmic. A helical transmembrane segment spans residues 806–826 (IIIFLVVFLGLFAGLVVLFYV). At 827-857 (HPIKCEWCELLTCIPFTDKFCEKYDLNAHLH) the chain is on the lumenal side.

Belongs to the peptidase S54 family.

It is found in the endoplasmic reticulum membrane. It localises to the golgi apparatus membrane. Regulates ADAM17 protease, a sheddase of the epidermal growth factor (EGF) receptor ligands and TNF, thereby plays a role in sleep, cell survival, proliferation, migration and inflammation. Does not exhibit any protease activity on its own. This chain is Inactive rhomboid protein 1 (rhbdf1), found in Danio rerio (Zebrafish).